The primary structure comprises 272 residues: Indole-3-glycerol phosphate synthase (272 aa).

The protein belongs to the TrpC family.

It carries out the reaction 1-(2-carboxyphenylamino)-1-deoxy-D-ribulose 5-phosphate + H(+) = (1S,2R)-1-C-(indol-3-yl)glycerol 3-phosphate + CO2 + H2O. It functions in the pathway amino-acid biosynthesis; L-tryptophan biosynthesis; L-tryptophan from chorismate: step 4/5. The protein is Indole-3-glycerol phosphate synthase of Mycolicibacterium gilvum (strain PYR-GCK) (Mycobacterium gilvum (strain PYR-GCK)).